Here is a 130-residue protein sequence, read N- to C-terminus: Large ribosomal subunit protein bL17 (130 aa).

Belongs to the bacterial ribosomal protein bL17 family. As to quaternary structure, part of the 50S ribosomal subunit. Contacts protein L32.

This chain is Large ribosomal subunit protein bL17, found in Delftia acidovorans (strain DSM 14801 / SPH-1).